The sequence spans 509 residues: Bifunctional purine biosynthesis protein PurH (509 aa).

An MGS-like domain is found at 1-144 (MKRALISVSD…KNYAAVTVVV (144 aa)).

It belongs to the PurH family.

It catalyses the reaction (6R)-10-formyltetrahydrofolate + 5-amino-1-(5-phospho-beta-D-ribosyl)imidazole-4-carboxamide = 5-formamido-1-(5-phospho-D-ribosyl)imidazole-4-carboxamide + (6S)-5,6,7,8-tetrahydrofolate. The enzyme catalyses IMP + H2O = 5-formamido-1-(5-phospho-D-ribosyl)imidazole-4-carboxamide. It functions in the pathway purine metabolism; IMP biosynthesis via de novo pathway; 5-formamido-1-(5-phospho-D-ribosyl)imidazole-4-carboxamide from 5-amino-1-(5-phospho-D-ribosyl)imidazole-4-carboxamide (10-formyl THF route): step 1/1. Its pathway is purine metabolism; IMP biosynthesis via de novo pathway; IMP from 5-formamido-1-(5-phospho-D-ribosyl)imidazole-4-carboxamide: step 1/1. This Listeria monocytogenes serotype 4a (strain HCC23) protein is Bifunctional purine biosynthesis protein PurH.